We begin with the raw amino-acid sequence, 75 residues long: UPF0352 protein VSAL_I1058 (75 aa).

It belongs to the UPF0352 family.

The protein is UPF0352 protein VSAL_I1058 of Aliivibrio salmonicida (strain LFI1238) (Vibrio salmonicida (strain LFI1238)).